We begin with the raw amino-acid sequence, 180 residues long: Large ribosomal subunit protein uL18m (180 aa).

It belongs to the universal ribosomal protein uL18 family. In terms of assembly, component of the mitochondrial ribosome large subunit (39S) which comprises a 16S rRNA and about 50 distinct proteins.

The protein localises to the mitochondrion. In terms of biological role, together with thiosulfate sulfurtransferase (TST), acts as a mitochondrial import factor for the cytosolic 5S rRNA. The precursor form shows RNA chaperone activity; is able to fold the 5S rRNA into an import-competent conformation that is recognized by rhodanese (TST). Both the cytoplasmic and mitochondrial forms are able to bind to the helix IV-loop D in the gamma domain of the 5S rRNA. The protein is Large ribosomal subunit protein uL18m (Mrpl18) of Mus musculus (Mouse).